Consider the following 572-residue polypeptide: Proline--tRNA ligase (572 aa).

The protein belongs to the class-II aminoacyl-tRNA synthetase family. ProS type 1 subfamily. In terms of assembly, homodimer.

Its subcellular location is the cytoplasm. The enzyme catalyses tRNA(Pro) + L-proline + ATP = L-prolyl-tRNA(Pro) + AMP + diphosphate. Functionally, catalyzes the attachment of proline to tRNA(Pro) in a two-step reaction: proline is first activated by ATP to form Pro-AMP and then transferred to the acceptor end of tRNA(Pro). As ProRS can inadvertently accommodate and process non-cognate amino acids such as alanine and cysteine, to avoid such errors it has two additional distinct editing activities against alanine. One activity is designated as 'pretransfer' editing and involves the tRNA(Pro)-independent hydrolysis of activated Ala-AMP. The other activity is designated 'posttransfer' editing and involves deacylation of mischarged Ala-tRNA(Pro). The misacylated Cys-tRNA(Pro) is not edited by ProRS. The polypeptide is Proline--tRNA ligase (Psychrobacter cryohalolentis (strain ATCC BAA-1226 / DSM 17306 / VKM B-2378 / K5)).